The following is a 110-amino-acid chain: Tyrosine-protein phosphatase 3 (110 aa).

One can recognise a Tyrosine-protein phosphatase domain in the interval 1–110; it reads QKCATIVMVT…NPPHSGPIVV (110 aa). D80 is a substrate binding site.

This sequence belongs to the protein-tyrosine phosphatase family.

It catalyses the reaction O-phospho-L-tyrosyl-[protein] + H2O = L-tyrosyl-[protein] + phosphate. The sequence is that of Tyrosine-protein phosphatase 3 (STY-3) from Styela plicata (Wrinkled sea squirt).